The chain runs to 122 residues: Large ribosomal subunit protein bL12 (122 aa).

It belongs to the bacterial ribosomal protein bL12 family. In terms of assembly, homodimer. Part of the ribosomal stalk of the 50S ribosomal subunit. Forms a multimeric L10(L12)X complex, where L10 forms an elongated spine to which 2 to 4 L12 dimers bind in a sequential fashion. Binds GTP-bound translation factors.

Functionally, forms part of the ribosomal stalk which helps the ribosome interact with GTP-bound translation factors. Is thus essential for accurate translation. The protein is Large ribosomal subunit protein bL12 of Shewanella putrefaciens (strain CN-32 / ATCC BAA-453).